Reading from the N-terminus, the 286-residue chain is Putative sugar uptake protein lmo0176 (286 aa).

8 consecutive transmembrane segments (helical) span residues 4–26 (MIAL…FGGS), 33–55 (GMTL…VYTL), 114–136 (LRII…TSYA), 149–167 (GLIT…VVLI), 177–194 (AILP…IMTH), 207–226 (LLLT…MVHA), 230–252 (VGVA…GGII), and 264–283 (LFVI…IGVA).

It belongs to the GRP transporter (TC 2.A.7.5) family.

It localises to the cell membrane. The chain is Putative sugar uptake protein lmo0176 from Listeria monocytogenes serovar 1/2a (strain ATCC BAA-679 / EGD-e).